The sequence spans 166 residues: Peptide deformylase (166 aa).

Residues C88 and H130 each contribute to the Fe cation site. The active site involves E131. H134 provides a ligand contact to Fe cation.

This sequence belongs to the polypeptide deformylase family. Fe(2+) is required as a cofactor.

The catalysed reaction is N-terminal N-formyl-L-methionyl-[peptide] + H2O = N-terminal L-methionyl-[peptide] + formate. In terms of biological role, removes the formyl group from the N-terminal Met of newly synthesized proteins. Requires at least a dipeptide for an efficient rate of reaction. N-terminal L-methionine is a prerequisite for activity but the enzyme has broad specificity at other positions. In Thermoanaerobacter sp. (strain X514), this protein is Peptide deformylase.